We begin with the raw amino-acid sequence, 221 residues long: Probable chemoreceptor glutamine deamidase CheD 1 (221 aa).

Belongs to the CheD family.

The catalysed reaction is L-glutaminyl-[protein] + H2O = L-glutamyl-[protein] + NH4(+). Functionally, probably deamidates glutamine residues to glutamate on methyl-accepting chemotaxis receptors (MCPs), playing an important role in chemotaxis. The chain is Probable chemoreceptor glutamine deamidase CheD 1 from Methanosarcina mazei (strain ATCC BAA-159 / DSM 3647 / Goe1 / Go1 / JCM 11833 / OCM 88) (Methanosarcina frisia).